The sequence spans 123 residues: cAMP-responsive element-binding protein-like 2 (123 aa).

The segment at 1-24 is disordered; sequence MDDSKVVGGKVKKPGKRGRKPAKI. A compositionally biased stretch (basic residues) spans 10–21; that stretch reads KVKKPGKRGRKP. One can recognise a bZIP domain in the interval 23-86; that stretch reads KIDLKAKLER…MAMDQGKIPS (64 aa). A basic motif region spans residues 29 to 60; that stretch reads KLERSRQSARECRARKKLRYQYLEELVSSRER. Residues 62–69 are leucine-zipper; sequence ICALREEL. Residues 92–123 are disordered; it reads LTGEEQSKPQQNSSRHPKAGKTDANTNSLVGN. Residues 114–123 show a composition bias toward polar residues; sequence DANTNSLVGN.

The protein belongs to the bZIP family. ATF subfamily. As to quaternary structure, interacts with CREB1; regulates CREB1 phosphorylation, stability and transcriptional activity. Post-translationally, phosphorylated by AMPK. Widely expressed with higher expression in adipose tissue, skeletal muscle, and liver (at protein level).

It localises to the nucleus. Functionally, probable regulator of CREB1 transcriptional activity which is involved in adipose cells differentiation. May also play a regulatory role in the cell cycle. The sequence is that of cAMP-responsive element-binding protein-like 2 (Crebl2) from Mus musculus (Mouse).